We begin with the raw amino-acid sequence, 303 residues long: GTPase Era (303 aa).

An Era-type G domain is found at 8–176 (YCGFIAIVGR…ASIVRKHMPE (169 aa)). The segment at 16-23 (GRPNVGKS) is G1. 16-23 (GRPNVGKS) serves as a coordination point for GTP. Positions 42-46 (QTTRH) are G2. A G3 region spans residues 63-66 (DTPG). GTP-binding positions include 63–67 (DTPGL) and 125–128 (NKVD). Residues 125-128 (NKVD) are G4. The G5 stretch occupies residues 155–157 (ISA). Residues 207-284 (LGEELPYSVT…HLELWVKVKS (78 aa)) form the KH type-2 domain.

The protein belongs to the TRAFAC class TrmE-Era-EngA-EngB-Septin-like GTPase superfamily. Era GTPase family. Monomer.

It is found in the cytoplasm. Its subcellular location is the cell inner membrane. An essential GTPase that binds both GDP and GTP, with rapid nucleotide exchange. Plays a role in 16S rRNA processing and 30S ribosomal subunit biogenesis and possibly also in cell cycle regulation and energy metabolism. The sequence is that of GTPase Era from Yersinia pseudotuberculosis serotype O:1b (strain IP 31758).